Here is an 883-residue protein sequence, read N- to C-terminus: Translation initiation factor IF-2 (883 aa).

Residues 32-45 (NDLNGKNNSNSSIN) are compositionally biased toward polar residues. 2 disordered regions span residues 32-216 (NDLN…QNKY) and 251-275 (RKLG…AETE). Over residues 46-62 (LDKHNNKVEYSQNRDNR) the composition is skewed to basic and acidic residues. Positions 75 to 216 (GGYSQNRDNR…VGKNTSQNKY (142 aa)) are enriched in polar residues. The segment covering 251–260 (RKLGEKKKQQ) has biased composition (basic and acidic residues). Residues 381–554 (EKPPVITIMG…DMMLLKANPS (174 aa)) enclose the tr-type G domain. The segment at 390-397 (GHVDHGKT) is G1. 390-397 (GHVDHGKT) lines the GTP pocket. Positions 415–419 (GITQH) are G2. Residues 436 to 439 (DTPG) form a G3 region. GTP contacts are provided by residues 436 to 440 (DTPGH) and 490 to 493 (NKID). Residues 490-493 (NKID) form a G4 region. Residues 526-528 (SAL) are G5.

It belongs to the TRAFAC class translation factor GTPase superfamily. Classic translation factor GTPase family. IF-2 subfamily.

The protein localises to the cytoplasm. In terms of biological role, one of the essential components for the initiation of protein synthesis. Protects formylmethionyl-tRNA from spontaneous hydrolysis and promotes its binding to the 30S ribosomal subunits. Also involved in the hydrolysis of GTP during the formation of the 70S ribosomal complex. This is Translation initiation factor IF-2 from Borrelia garinii subsp. bavariensis (strain ATCC BAA-2496 / DSM 23469 / PBi) (Borreliella bavariensis).